Here is a 313-residue protein sequence, read N- to C-terminus: Heterogeneous nuclear ribonucleoproteins C1/C2 (313 aa).

Ala-2 bears the N-acetylalanine mark. Glycyl lysine isopeptide (Lys-Gly) (interchain with G-Cter in SUMO2) cross-links involve residues Lys-8, Lys-50, Lys-89, and Lys-94. The region spanning 16 to 87 is the RRM domain; sequence SRVFIGNLNT…QVLDINLAAE (72 aa). A phosphoserine mark is found at Ser-113, Ser-115, and Ser-121. Disordered stretches follow at residues 139–191 and 219–313; these read YPAR…KLKG and EKEQ…EDDS. Positions 155–161 match the Nuclear localization signal motif; sequence PSKRQRV. A phosphoserine mark is found at Ser-162 and Ser-166. Residues 175–186 show a composition bias toward low complexity; the sequence is SKSGQRGSSSKS. The residue at position 176 (Lys-176) is an N6-acetyllysine; alternate. Lys-176 participates in a covalent cross-link: Glycyl lysine isopeptide (Lys-Gly) (interchain with G-Cter in SUMO2); alternate. Positions 191–226 form a coiled coil; sequence GDDLQAIKKELTQIKQKVDSLLESLEKIEKEQSKQA. A Glycyl lysine isopeptide (Lys-Gly) (interchain with G-Cter in SUMO2) cross-link involves residue Lys-224. Phosphoserine is present on residues Ser-229, Ser-231, and Ser-232. Lys-237 is covalently cross-linked (Glycyl lysine isopeptide (Lys-Gly) (interchain with G-Cter in SUMO2)). Lys-240 participates in a covalent cross-link: Glycyl lysine isopeptide (Lys-Gly) (interchain with G-Cter in SUMO2); alternate. Lys-240 is covalently cross-linked (Glycyl lysine isopeptide (Lys-Gly) (interchain with G-Cter in SUMO1); alternate). 4 positions are modified to phosphoserine: Ser-241, Ser-246, Ser-247, and Ser-249. The span at 250–261 shows a compositional bias: basic and acidic residues; that stretch reads VKKDETNVKMES. Residues Lys-251 and Lys-252 each participate in a glycyl lysine isopeptide (Lys-Gly) (interchain with G-Cter in SUMO2) cross-link. Lys-258 participates in a covalent cross-link: Glycyl lysine isopeptide (Lys-Gly) (interchain with G-Cter in SUMO2); alternate. Lys-258 is covalently cross-linked (Glycyl lysine isopeptide (Lys-Gly) (interchain with G-Cter in SUMO); alternate). 2 positions are modified to phosphoserine: Ser-261 and Ser-268. Residues 263-284 are compositionally biased toward acidic residues; it reads AGADDSAEEGDLLDDDDNEDRG. Positions 285-294 are enriched in basic and acidic residues; that stretch reads DDQLELKDDE. A compositionally biased stretch (acidic residues) spans 295 to 313; the sequence is KEPEEGEDDRDSANGEDDS. Ser-306 and Ser-313 each carry phosphoserine.

The protein belongs to the RRM HNRPC family. RALY subfamily. As to quaternary structure, tetramer composed of 3 copies of isoform C1 and 1 copy of isoform C2. Assembly of 3 tetramers with bound pre-mRNA gives rise to a 19S complex that interacts with HNRNPA2B1 tetramers. Component of the 40S hnRNP particle. Identified in the spliceosome C complex. Interacts with IGF2BP1. Interacts with DHX9; this interaction is direct, enhanced probably by their concomitant binding to RNA and mediates the attachment to actin filaments. Interacts with PPIA/CYPA. Phosphorylated on Ser-268 and Ser-306 in resting cells. Post-translationally, sumoylated. Sumoylation reduces affinity for mRNA. In terms of processing, ubiquitinated and degraded after nucleo-cytoplasmic transport by YWHAE.

It is found in the nucleus. Binds pre-mRNA and nucleates the assembly of 40S hnRNP particles. Interacts with poly-U tracts in the 3'-UTR or 5'-UTR of mRNA and modulates the stability and the level of translation of bound mRNA molecules. Single HNRNPC tetramers bind 230-240 nucleotides. Trimers of HNRNPC tetramers bind 700 nucleotides. May play a role in the early steps of spliceosome assembly and pre-mRNA splicing. N6-methyladenosine (m6A) has been shown to alter the local structure in mRNAs and long non-coding RNAs (lncRNAs) via a mechanism named 'm(6)A-switch', facilitating binding of HNRNPC, leading to regulation of mRNA splicing. This is Heterogeneous nuclear ribonucleoproteins C1/C2 (Hnrnpc) from Mus musculus (Mouse).